We begin with the raw amino-acid sequence, 113 residues long: Ig kappa chain V-II region 7S34.1 (113 aa).

Positions 1 to 23 (DIVMTQTAPSALVTPGESVSISC) are framework-1. A disulfide bridge links C23 with C93. A complementarity-determining-1 region spans residues 24–39 (RSSKSLLHSNGNTYLY). The tract at residues 40–54 (WFLQRPGQCPQLLIY) is framework-2. Residues 55 to 61 (RMSNLAS) form a complementarity-determining-2 region. The interval 62–93 (GVPDRFSGSGSGTAFTLRISRVEAEDVGVYYC) is framework-3. A complementarity-determining-3 region spans residues 94–102 (MQQREYPYT). Positions 103 to 112 (FGGGTKLEIK) are framework-4.

This Mus musculus (Mouse) protein is Ig kappa chain V-II region 7S34.1.